Consider the following 167-residue polypeptide: Periplasmic nitrate reductase, electron transfer subunit (167 aa).

The first 34 residues, 1–34 (MRRAHRAGERVMMKRFGIALLAVAIAAGASSLTA), serve as a signal peptide directing secretion. A disordered region spans residues 40 to 65 (GLHGPAPLNDEGPAPPMLPNRNTSER). The heme c site is built by histidine 79, cysteine 93, cysteine 96, histidine 97, histidine 114, cysteine 133, cysteine 136, and histidine 137.

It belongs to the NapB family. In terms of assembly, component of the periplasmic nitrate reductase NapAB complex composed of NapA and NapB. Binds 2 heme C groups per subunit.

It localises to the periplasm. Functionally, electron transfer subunit of the periplasmic nitrate reductase complex NapAB. Receives electrons from the membrane-anchored tetraheme c-type NapC protein and transfers these to NapA subunit, thus allowing electron flow between membrane and periplasm. Essential for periplasmic nitrate reduction with nitrate as the terminal electron acceptor. This Bradyrhizobium japonicum protein is Periplasmic nitrate reductase, electron transfer subunit.